The sequence spans 462 residues: 3-oxoacyl-[acyl-carrier-protein] synthase I, chloroplastic (462 aa).

The transit peptide at methionine 1–alanine 35 directs the protein to the chloroplast. Residues methionine 1–aspartate 45 are disordered. A compositionally biased stretch (basic residues) spans proline 19–proline 29. The span at alanine 30–alanine 39 shows a compositional bias: low complexity. One can recognise a Ketosynthase family 3 (KS3) domain in the interval arginine 47–proline 459. Residues cysteine 213, histidine 353, and histidine 389 each act as for beta-ketoacyl synthase activity in the active site.

The protein belongs to the thiolase-like superfamily. Beta-ketoacyl-ACP synthases family. In terms of assembly, homodimer.

The protein localises to the plastid. The protein resides in the chloroplast. It carries out the reaction a fatty acyl-[ACP] + malonyl-[ACP] + H(+) = a 3-oxoacyl-[ACP] + holo-[ACP] + CO2. Catalyzes the condensation reaction of fatty acid synthesis by the addition to an acyl acceptor of two carbons from malonyl-ACP. Specific for elongation from C-10 to unsaturated C-16 and C-18 fatty acids. In Hordeum vulgare (Barley), this protein is 3-oxoacyl-[acyl-carrier-protein] synthase I, chloroplastic (KAS12).